The sequence spans 94 residues: MITYHDAFAKANHYLDDADLPVVITLHGRFSQGWYFCFEAREFLETGDEAARLAGNAPFIIDKDSGEIHSLGTAKPLEEYLQDYEIKKATFGLP.

This is an uncharacterized protein from Escherichia coli (strain K12).